Consider the following 470-residue polypeptide: Putative multidrug resistance protein MdtD (470 aa).

Residues 1–11 (MTELPDNTRWQ) lie on the Periplasmic side of the membrane. Residues 12-32 (LWIVAFGFFMQSLDTTIVNTA) traverse the membrane as a helical segment. The Cytoplasmic segment spans residues 33–48 (LPSMAKSLGESPLHMH). The chain crosses the membrane as a helical span at residues 49 to 69 (MVVVSYVLTVAVMLPASGWLA). Residues 70–76 (DKIGVRN) are Periplasmic-facing. Residues 77-97 (IFFAAIVLFTLGSLFCALSGT) form a helical membrane-spanning segment. The Cytoplasmic portion of the chain corresponds to 98-101 (LNQL). A helical transmembrane segment spans residues 102 to 124 (VLARVLQGVGGAMMVPVGRLTVM). Residues 125 to 137 (KIVPRAQYMAAMT) are Periplasmic-facing. Residues 138–158 (FVTLPGQIGPLLGPALGGVLV) traverse the membrane as a helical segment. The Cytoplasmic segment spans residues 159–164 (EYASWH). The chain crosses the membrane as a helical span at residues 165–185 (WIFLINIPVGIVGAMATFMLM). Over 186–196 (PNYIIETRRFD) the chain is Periplasmic. Residues 197 to 217 (LPGFLLLAIGMAVLTLALDGS) form a helical membrane-spanning segment. Over 218–224 (KSMGISP) the chain is Cytoplasmic. The helical transmembrane segment at 225-245 (WTLAGLAAGGAAAILLYLFHA) threads the bilayer. The Periplasmic segment spans residues 246-262 (KKNSGALFSLRLFRTPT). Residues 263–283 (FSLGLLGSFAGRIGSGMLPFM) form a helical membrane-spanning segment. Residues 284–285 (TP) are Cytoplasmic-facing. A helical transmembrane segment spans residues 286 to 306 (VFLQIGLGFSPFHAGLMMIPM). Residues 307–341 (VLGSMGMKRIVVQIVNRFGYRRVLVATTLGLALVS) are Periplasmic-facing. Residues 342–362 (LLFMSVALLGWYYLLPLVLLL) form a helical membrane-spanning segment. Over 363–395 (QGMVNSARFSSMNTLTLKDLPDTLASSGNSLLS) the chain is Cytoplasmic. A helical membrane pass occupies residues 396–416 (MIMQLSMSIGVTIAGMLLGMF). The Periplasmic portion of the chain corresponds to 417–430 (GQQHIGIDSSATHH). The chain crosses the membrane as a helical span at residues 431–451 (VFMYTWLCMAVIIALPAIIFA). The Cytoplasmic portion of the chain corresponds to 452–470 (RVPNDTQQNMVISRRKRSL).

This sequence belongs to the major facilitator superfamily. TCR/Tet family.

The protein localises to the cell inner membrane. The polypeptide is Putative multidrug resistance protein MdtD (Salmonella typhimurium (strain LT2 / SGSC1412 / ATCC 700720)).